Here is a 343-residue protein sequence, read N- to C-terminus: Palmitoyltransferase ZDHHC4 (343 aa).

Residues 1 to 2 (MD) lie on the Lumenal side of the membrane. Residues 3–23 (FLVLFLLYLALVLLGFVMICI) traverse the membrane as a helical segment. The Cytoplasmic segment spans residues 24 to 67 (GSKTHYLQGLISRGAQVFSYIIPECLQRAMLSVLHYLFHTRNYT). Residues 68-88 (FVVLHLILQGMVYTEYTWEIF) traverse the membrane as a helical segment. At 89–95 (GLCQQLE) the chain is on the lumenal side. A helical transmembrane segment spans residues 96-116 (FSLYYLFLPYLLLIVNLLFFT). The Cytoplasmic segment spans residues 117–196 (LSCVTNPGTI…GAWNTRYFLS (80 aa)). The DHHC domain maps to 149-199 (VRCPTCDLRKPARSKHCSVCNRCVHRFDHHCVWVNNCIGAWNTRYFLSYLF). Catalysis depends on cysteine 179, which acts as the S-palmitoyl cysteine intermediate. A helical transmembrane segment spans residues 197-217 (YLFTLTASAATMAVVSTVFLV). Topologically, residues 218–255 (RLVVMSDVYLQTYVDDLGHLQVVDTVFLVQYLFLTFPR) are lumenal. Residues 256-276 (IVFLVGFVVVLSFLLGGYLCF) traverse the membrane as a helical segment. Over 277-343 (CLYLAATNQT…ATACYERKEK (67 aa)) the chain is Cytoplasmic. The short motif at 340-343 (RKEK) is the Di-lysine motif element.

This sequence belongs to the DHHC palmitoyltransferase family. In terms of assembly, interacts with CPT1A.

Its subcellular location is the endoplasmic reticulum membrane. It is found in the golgi apparatus membrane. It localises to the cell membrane. It catalyses the reaction L-cysteinyl-[protein] + hexadecanoyl-CoA = S-hexadecanoyl-L-cysteinyl-[protein] + CoA. Functionally, palmitoyltransferase that could catalyze the addition of palmitate onto protein substrates including the D(2) dopamine receptor DRD2, GSK3B or MAVS. Mediates GSK3B palmitoylation to prevent its AKT1-mediated phosphorylation leading to activation of the STAT3 signaling pathway. Also catalyzes MAVS palmitoylation which promotes its stabilization and activation by inhibiting 'Lys-48'- but facilitating 'Lys-63'-linked ubiquitination. In Bos taurus (Bovine), this protein is Palmitoyltransferase ZDHHC4.